Reading from the N-terminus, the 304-residue chain is Oxygen-dependent coproporphyrinogen-III oxidase (304 aa).

Substrate is bound at residue S94. H98 and H108 together coordinate a divalent metal cation. H108 serves as the catalytic Proton donor. 110-112 (NVR) contacts substrate. H147 and H177 together coordinate a divalent metal cation. The tract at residues 242–277 (YVEFNLVWDRGTLFGLQSGGRTESVLMSMPPLARWQ) is important for dimerization. 260-262 (GGR) is a binding site for substrate.

The protein belongs to the aerobic coproporphyrinogen-III oxidase family. As to quaternary structure, homodimer. A divalent metal cation serves as cofactor.

The protein resides in the cytoplasm. The enzyme catalyses coproporphyrinogen III + O2 + 2 H(+) = protoporphyrinogen IX + 2 CO2 + 2 H2O. It functions in the pathway porphyrin-containing compound metabolism; protoporphyrin-IX biosynthesis; protoporphyrinogen-IX from coproporphyrinogen-III (O2 route): step 1/1. Involved in the heme biosynthesis. Catalyzes the aerobic oxidative decarboxylation of propionate groups of rings A and B of coproporphyrinogen-III to yield the vinyl groups in protoporphyrinogen-IX. The polypeptide is Oxygen-dependent coproporphyrinogen-III oxidase (Sodalis glossinidius (strain morsitans)).